A 404-amino-acid polypeptide reads, in one-letter code: MAASATTSTLAVTMFGYPNRNCHLKPPATATLRFWRSAAAAAVATSRREAEAEEADEVRRCLAPARLEVLEQMEPWVEAHVLPLLKPAEEAWQPADLVPDAAALGADGFHAACVELRGRAAGVPDAHLVCLVGNMVTEEALPTYQSMANRFESARDVTGADATAWARWIRGWSAEENRHGDVLNRYMYLSGRLDMRQVERTVHRLIGSGMAMHAPASPYHGFIYVAFQERATAISHGNTARNVRAHGDDALARICGAIASDEKRHEAAYTRVVERLLEADPDTTVRALAYMMRRRITMPAALMDDGRDADLFAHYAAAAQQAGTYTASDYRGILEHLIRRWRVAELEAGLSGEGRRARDYVCALPQKIRRMEEKAHDRAAQMRKRPTAIPFSWIFDKPVDLMLP.

A chloroplast-targeting transit peptide spans 1–39 (MAASATTSTLAVTMFGYPNRNCHLKPPATATLRFWRSAA). Glu-138, Glu-176, His-179, Glu-229, Glu-262, and His-265 together coordinate Fe cation.

Belongs to the fatty acid desaturase type 2 family. Homodimer. The cofactor is Fe(2+).

Its subcellular location is the plastid. It is found in the chloroplast. The protein operates within lipid metabolism; fatty acid metabolism. Functionally, introduces a cis double bond in the acyl chain of an acyl-[acyl-carrier protein]. This chain is Acyl-[acyl-carrier-protein] desaturase 7, chloroplastic, found in Oryza sativa subsp. indica (Rice).